The chain runs to 112 residues: Elongin-C (112 aa).

Belongs to the SKP1 family. Heterotrimer of an A (ELOA, ELOA2 or ELOA3P), ELOB and ELOC subunit. The elongin BC complex interacts with EPOP; leading to recruit the elongin BC complex to Polycomb group (PcG) target genes, thereby restricting excessive activity of the PRC2/EED-EZH2 complex. Component of multiple cullin-RING E3 ubiquitin-protein ligase complexes composed of Elongin BC (ELOB and ELOC), a cullin (CUL2 or CUL5), a catalytic subunit (RBX1 or RNF7/RBX2), as well as a substrate adapter protein that can be either ASB2, ASB9, ASB11, KLHDC2, KLHDC3, KLHDC10, APPBP2, FEM1A, FEM1B, FEM1C, LRR1, PCMTD1, SOCS1, SOCS2, SOCS5, SPSB1, SPSB3, ELOA, VHL, WSB1, ZYG11B or RAB40C. Interacts with TMF1. As part of the Elongin BC E3 ubiquitin ligase complex; interacts with NRBP1. May form oligomers as a KLHDC2/KLHDC3-ELOB-ELOC complex; this interaction is autoinhibitory for the E3 ligase complex as the substrate-binding site of KLHDC2/KLHDC3 is blocked in the oligomer. Ubiquitinated by the DCX(AMBRA1) complex, leading to its degradation by the proteasome.

The protein resides in the nucleus. The protein operates within protein modification; protein ubiquitination. In terms of biological role, SIII, also known as elongin, is a general transcription elongation factor that increases the RNA polymerase II transcription elongation past template-encoded arresting sites. Subunit A is transcriptionally active and its transcription activity is strongly enhanced by binding to the dimeric complex of the SIII regulatory subunits B and C (elongin BC complex). In embryonic stem cells, the elongin BC complex is recruited by EPOP to Polycomb group (PcG) target genes in order generate genomic region that display both active and repressive chromatin properties, an important feature of pluripotent stem cells. Core component of multiple cullin-RING-based ECS (ElonginB/C-CUL2/5-SOCS-box protein) E3 ubiquitin-protein ligase complexes, which mediate the ubiquitination of target proteins. By binding to BC-box motifs it seems to link target recruitment subunits, like VHL and members of the SOCS box family, to Cullin/RBX1 modules that activate E2 ubiquitination enzymes. Component the von Hippel-Lindau ubiquitination complex CBC(VHL). A number of ECS complexes (containing either KLHDC2, KLHDC3, KLHDC10, APPBP2, FEM1A, FEM1B or FEM1C as substrate-recognition component) are part of the DesCEND (destruction via C-end degrons) pathway, which recognizes a C-degron located at the extreme C terminus of target proteins, leading to their ubiquitination and degradation. The ECS(ASB9) complex mediates ubiquitination and degradation of CKB. As part of a multisubunit ubiquitin ligase complex, polyubiquitinates monoubiquitinated POLR2A. ECS(LRR1) ubiquitinates MCM7 and promotes CMG replisome disassembly by VCP and chromatin extraction during S-phase. As part of the ECS(RAB40C) complex, mediates ANKRD28 ubiquitination and degradation, thereby inhibiting protein phosphatase 6 (PP6) complex activity and focal adhesion assembly during cell migration. This chain is Elongin-C (ELOC), found in Bos taurus (Bovine).